A 252-amino-acid polypeptide reads, in one-letter code: 2-succinyl-6-hydroxy-2,4-cyclohexadiene-1-carboxylate synthase (252 aa).

The protein belongs to the AB hydrolase superfamily. MenH family. As to quaternary structure, monomer.

It catalyses the reaction 5-enolpyruvoyl-6-hydroxy-2-succinyl-cyclohex-3-ene-1-carboxylate = (1R,6R)-6-hydroxy-2-succinyl-cyclohexa-2,4-diene-1-carboxylate + pyruvate. The protein operates within quinol/quinone metabolism; 1,4-dihydroxy-2-naphthoate biosynthesis; 1,4-dihydroxy-2-naphthoate from chorismate: step 3/7. Its pathway is quinol/quinone metabolism; menaquinone biosynthesis. Catalyzes a proton abstraction reaction that results in 2,5-elimination of pyruvate from 2-succinyl-5-enolpyruvyl-6-hydroxy-3-cyclohexene-1-carboxylate (SEPHCHC) and the formation of 2-succinyl-6-hydroxy-2,4-cyclohexadiene-1-carboxylate (SHCHC). The protein is 2-succinyl-6-hydroxy-2,4-cyclohexadiene-1-carboxylate synthase of Salmonella schwarzengrund (strain CVM19633).